The primary structure comprises 69 residues: Putative membrane protein insertion efficiency factor (69 aa).

The protein belongs to the UPF0161 family.

The protein localises to the cell inner membrane. Could be involved in insertion of integral membrane proteins into the membrane. The protein is Putative membrane protein insertion efficiency factor of Chromobacterium violaceum (strain ATCC 12472 / DSM 30191 / JCM 1249 / CCUG 213 / NBRC 12614 / NCIMB 9131 / NCTC 9757 / MK).